Consider the following 249-residue polypeptide: tRNA pseudouridine synthase A (249 aa).

Asp53 functions as the Nucleophile in the catalytic mechanism. Position 111 (Tyr111) interacts with substrate.

This sequence belongs to the tRNA pseudouridine synthase TruA family. In terms of assembly, homodimer.

The catalysed reaction is uridine(38/39/40) in tRNA = pseudouridine(38/39/40) in tRNA. Formation of pseudouridine at positions 38, 39 and 40 in the anticodon stem and loop of transfer RNAs. The protein is tRNA pseudouridine synthase A of Streptococcus sanguinis (strain SK36).